The chain runs to 1588 residues: uncharacterized protein (1588 aa).

The segment covering 486 to 495 (RKRLTSKTED) has biased composition (basic and acidic residues). Disordered stretches follow at residues 486–515 (RKRLTSKTEDDQNQWTRDCQNSGEDKKRRP) and 1146–1176 (GGQDNVSDQSENQSENQSLESETSPIVRELN). The segment covering 498–507 (NQWTRDCQNS) has biased composition (polar residues). Residues 1150 to 1169 (NVSDQSENQSENQSLESETS) are compositionally biased toward low complexity.

It localises to the virion. This is an uncharacterized protein from Acanthamoeba polyphaga (Amoeba).